Reading from the N-terminus, the 124-residue chain is V-type proton ATPase subunit F (124 aa).

The protein belongs to the V-ATPase F subunit family. As to quaternary structure, V-ATPase is a heteromultimeric enzyme composed of a peripheral catalytic V1 complex (components A to H) attached to an integral membrane V0 proton pore complex (components: a, c, c', c'', d, e, f and VOA1).

The protein resides in the vacuole membrane. Functionally, subunit of the V1 complex of vacuolar(H+)-ATPase (V-ATPase), a multisubunit enzyme composed of a peripheral complex (V1) that hydrolyzes ATP and a membrane integral complex (V0) that translocates protons. V-ATPase is responsible for acidifying and maintaining the pH of intracellular compartments. This Neosartorya fischeri (strain ATCC 1020 / DSM 3700 / CBS 544.65 / FGSC A1164 / JCM 1740 / NRRL 181 / WB 181) (Aspergillus fischerianus) protein is V-type proton ATPase subunit F (vma7).